The sequence spans 186 residues: Putative 3-methyladenine DNA glycosylase (186 aa).

This sequence belongs to the DNA glycosylase MPG family.

This is Putative 3-methyladenine DNA glycosylase from Borreliella burgdorferi (strain ATCC 35210 / DSM 4680 / CIP 102532 / B31) (Borrelia burgdorferi).